We begin with the raw amino-acid sequence, 346 residues long: MNAIIWENNQLQLLDQTKLPRTIEYIQCTDYHTVGKAIKKLSVRGAPAIGAAAAYGLVVGAQQVDATDRKTFLEKLEAIAGELGATRPTAVNLRWALDRMMMRLSTAPEQNVEDLRKIMLEEAHAIYNEDVESNRKMGEYGQELLPEEARVLTHCNAGALATAGYGTALGVVRAAHEKGKKVHVYADETRPLLQGARLTSWEMVQEGIPVTLITDNMAGYLMSKKMVDCIVVGADRITANGDVANKIGTYGVAVLANHHNIPFYVAAPLSTIDMSLSSGEEIPIEERDPQEVTHHGGQPMAPEGVQVWNPAFDVTPNSLVKAIITERGVVLPPFAENLAKICCNKK.

Substrate contacts are provided by residues 44-46, Arg87, and Gln194; that span reads RGA. Residue Asp235 is the Proton donor of the active site. A substrate-binding site is contributed by 245 to 246; the sequence is NK.

Belongs to the eIF-2B alpha/beta/delta subunits family. MtnA subfamily.

The catalysed reaction is 5-(methylsulfanyl)-alpha-D-ribose 1-phosphate = 5-(methylsulfanyl)-D-ribulose 1-phosphate. Its pathway is amino-acid biosynthesis; L-methionine biosynthesis via salvage pathway; L-methionine from S-methyl-5-thio-alpha-D-ribose 1-phosphate: step 1/6. Its function is as follows. Catalyzes the interconversion of methylthioribose-1-phosphate (MTR-1-P) into methylthioribulose-1-phosphate (MTRu-1-P). In Desulforamulus reducens (strain ATCC BAA-1160 / DSM 100696 / MI-1) (Desulfotomaculum reducens), this protein is Methylthioribose-1-phosphate isomerase.